A 192-amino-acid chain; its full sequence is Phosphoheptose isomerase (192 aa).

In terms of domain architecture, SIS spans 35-192; that stretch reads LIETLENQGK…CIERHFAHKN (158 aa). 50-52 lines the substrate pocket; sequence NGG. 2 residues coordinate Zn(2+): histidine 59 and glutamate 63. Residues glutamate 63, 92-93, 118-120, serine 123, and glutamine 170 contribute to the substrate site; these read ND and STS. Residues glutamine 170 and histidine 178 each contribute to the Zn(2+) site.

It belongs to the SIS family. GmhA subfamily. As to quaternary structure, homotetramer. Zn(2+) is required as a cofactor.

The protein resides in the cytoplasm. The enzyme catalyses 2 D-sedoheptulose 7-phosphate = D-glycero-alpha-D-manno-heptose 7-phosphate + D-glycero-beta-D-manno-heptose 7-phosphate. It participates in carbohydrate biosynthesis; D-glycero-D-manno-heptose 7-phosphate biosynthesis; D-glycero-alpha-D-manno-heptose 7-phosphate and D-glycero-beta-D-manno-heptose 7-phosphate from sedoheptulose 7-phosphate: step 1/1. In terms of biological role, catalyzes the isomerization of sedoheptulose 7-phosphate in D-glycero-D-manno-heptose 7-phosphate. This is Phosphoheptose isomerase from Helicobacter pylori (strain HPAG1).